We begin with the raw amino-acid sequence, 197 residues long: Pyridoxal 5'-phosphate synthase subunit PdxT (197 aa).

52 to 54 provides a ligand contact to L-glutamine; sequence GES. Cys83 (nucleophile) is an active-site residue. L-glutamine is bound by residues Arg115 and 142-143; that span reads IR. Residues His178 and Glu180 each act as charge relay system in the active site.

Belongs to the glutaminase PdxT/SNO family. As to quaternary structure, in the presence of PdxS, forms a dodecamer of heterodimers. Only shows activity in the heterodimer.

It catalyses the reaction aldehydo-D-ribose 5-phosphate + D-glyceraldehyde 3-phosphate + L-glutamine = pyridoxal 5'-phosphate + L-glutamate + phosphate + 3 H2O + H(+). The enzyme catalyses L-glutamine + H2O = L-glutamate + NH4(+). Its pathway is cofactor biosynthesis; pyridoxal 5'-phosphate biosynthesis. Catalyzes the hydrolysis of glutamine to glutamate and ammonia as part of the biosynthesis of pyridoxal 5'-phosphate. The resulting ammonia molecule is channeled to the active site of PdxS. The protein is Pyridoxal 5'-phosphate synthase subunit PdxT of Korarchaeum cryptofilum (strain OPF8).